The chain runs to 351 residues: Anthranilate phosphoribosyltransferase (351 aa).

Residues glycine 84, 87–88 (GD), 95–98 (NISS), 113–121 (KHGNRGASS), and alanine 125 each bind 5-phospho-alpha-D-ribose 1-diphosphate. An anthranilate-binding site is contributed by glycine 84. Serine 97 contacts Mg(2+). Asparagine 116 contacts anthranilate. Anthranilate is bound at residue arginine 171. The Mg(2+) site is built by aspartate 229 and lysine 230.

The protein belongs to the anthranilate phosphoribosyltransferase family. As to quaternary structure, homodimer. Requires Mg(2+) as cofactor.

It catalyses the reaction N-(5-phospho-beta-D-ribosyl)anthranilate + diphosphate = 5-phospho-alpha-D-ribose 1-diphosphate + anthranilate. The protein operates within amino-acid biosynthesis; L-tryptophan biosynthesis; L-tryptophan from chorismate: step 2/5. In terms of biological role, catalyzes the transfer of the phosphoribosyl group of 5-phosphorylribose-1-pyrophosphate (PRPP) to anthranilate to yield N-(5'-phosphoribosyl)-anthranilate (PRA). This Clavibacter michiganensis subsp. michiganensis (strain NCPPB 382) protein is Anthranilate phosphoribosyltransferase.